The chain runs to 464 residues: Glucan 1,3-beta-glucosidase 3 (464 aa).

The protein belongs to the glycosyl hydrolase 5 (cellulase A) family.

The catalysed reaction is Successive hydrolysis of beta-D-glucose units from the non-reducing ends of (1-&gt;3)-beta-D-glucans, releasing alpha-glucose.. This is Glucan 1,3-beta-glucosidase 3 (exg3) from Schizosaccharomyces pombe (strain 972 / ATCC 24843) (Fission yeast).